Here is a 251-residue protein sequence, read N- to C-terminus: Ubiquinone/menaquinone biosynthesis C-methyltransferase UbiE (251 aa).

Residues Thr-74, Asp-95, 123-124 (NA), and Ser-140 contribute to the S-adenosyl-L-methionine site.

The protein belongs to the class I-like SAM-binding methyltransferase superfamily. MenG/UbiE family.

It catalyses the reaction a 2-demethylmenaquinol + S-adenosyl-L-methionine = a menaquinol + S-adenosyl-L-homocysteine + H(+). The catalysed reaction is a 2-methoxy-6-(all-trans-polyprenyl)benzene-1,4-diol + S-adenosyl-L-methionine = a 5-methoxy-2-methyl-3-(all-trans-polyprenyl)benzene-1,4-diol + S-adenosyl-L-homocysteine + H(+). It functions in the pathway quinol/quinone metabolism; menaquinone biosynthesis; menaquinol from 1,4-dihydroxy-2-naphthoate: step 2/2. It participates in cofactor biosynthesis; ubiquinone biosynthesis. Methyltransferase required for the conversion of demethylmenaquinol (DMKH2) to menaquinol (MKH2) and the conversion of 2-polyprenyl-6-methoxy-1,4-benzoquinol (DDMQH2) to 2-polyprenyl-3-methyl-6-methoxy-1,4-benzoquinol (DMQH2). The polypeptide is Ubiquinone/menaquinone biosynthesis C-methyltransferase UbiE (Klebsiella pneumoniae subsp. pneumoniae (strain ATCC 700721 / MGH 78578)).